A 342-amino-acid polypeptide reads, in one-letter code: GTPase Obg (342 aa).

The Obg domain occupies 1-159 (MKFLDLCKVY…RTIWLRLKLI (159 aa)). The 168-residue stretch at 160-327 (ADAGLLGLPN…VLRALWAEID (168 aa)) folds into the OBG-type G domain. GTP contacts are provided by residues 166–173 (GLPNAGKS), 191–195 (FTTLV), 212–215 (DIPG), 279–282 (NKID), and 308–310 (SGV). Mg(2+) is bound by residues Ser173 and Thr193.

Belongs to the TRAFAC class OBG-HflX-like GTPase superfamily. OBG GTPase family. Monomer. Mg(2+) serves as cofactor.

Its subcellular location is the cytoplasm. Functionally, an essential GTPase which binds GTP, GDP and possibly (p)ppGpp with moderate affinity, with high nucleotide exchange rates and a fairly low GTP hydrolysis rate. Plays a role in control of the cell cycle, stress response, ribosome biogenesis and in those bacteria that undergo differentiation, in morphogenesis control. The polypeptide is GTPase Obg (Cereibacter sphaeroides (strain ATCC 17029 / ATH 2.4.9) (Rhodobacter sphaeroides)).